A 290-amino-acid chain; its full sequence is Diaminopimelate epimerase (290 aa).

Positions 17, 49, and 69 each coordinate substrate. Catalysis depends on C78, which acts as the Proton donor. Substrate-binding positions include 79-80, N165, N198, and 216-217; these read GN and ER. The active-site Proton acceptor is C225. 226–227 is a substrate binding site; that stretch reads GS.

This sequence belongs to the diaminopimelate epimerase family. In terms of assembly, homodimer.

Its subcellular location is the cytoplasm. It catalyses the reaction (2S,6S)-2,6-diaminopimelate = meso-2,6-diaminopimelate. It functions in the pathway amino-acid biosynthesis; L-lysine biosynthesis via DAP pathway; DL-2,6-diaminopimelate from LL-2,6-diaminopimelate: step 1/1. Catalyzes the stereoinversion of LL-2,6-diaminopimelate (L,L-DAP) to meso-diaminopimelate (meso-DAP), a precursor of L-lysine and an essential component of the bacterial peptidoglycan. This Methylocella silvestris (strain DSM 15510 / CIP 108128 / LMG 27833 / NCIMB 13906 / BL2) protein is Diaminopimelate epimerase.